A 245-amino-acid polypeptide reads, in one-letter code: Haloacid dehalogenase-like hydrolase domain-containing protein At2g33255 (245 aa).

T2 carries the N-acetylalanine modification. The active-site Nucleophile is D39. Positions 39, 41, and 186 each coordinate Mg(2+). D41 acts as the Proton donor in catalysis.

The protein belongs to the HAD-like hydrolase superfamily. DOG/GPP family. Mg(2+) is required as a cofactor.

This chain is Haloacid dehalogenase-like hydrolase domain-containing protein At2g33255, found in Arabidopsis thaliana (Mouse-ear cress).